The chain runs to 85 residues: Ice-structuring protein 4 (85 aa).

A signal peptide spans 1 to 21 (MRITEANPDPDAKAVPAAAAP).

It belongs to the type-I AFP family.

It is found in the secreted. Functionally, contributes to protect fish blood from freezing at subzero sea water temperatures. Lowers the blood freezing point. Binds to nascent ice crystals and prevents further growth. This chain is Ice-structuring protein 4, found in Pseudopleuronectes americanus (Winter flounder).